The sequence spans 68 residues: Small integral membrane protein 45 (68 aa).

A helical transmembrane segment spans residues 7 to 27 (WFVPVYLVISVLILVGFGACI).

Highly expressed in brain.

Its subcellular location is the nucleus. The protein localises to the cytoplasm. It localises to the membrane. Plays a role in the regulation of neuron maturation. The sequence is that of Small integral membrane protein 45 from Homo sapiens (Human).